The chain runs to 248 residues: 3-deoxy-manno-octulosonate cytidylyltransferase (248 aa).

The protein belongs to the KdsB family.

It is found in the cytoplasm. It catalyses the reaction 3-deoxy-alpha-D-manno-oct-2-ulosonate + CTP = CMP-3-deoxy-beta-D-manno-octulosonate + diphosphate. It functions in the pathway nucleotide-sugar biosynthesis; CMP-3-deoxy-D-manno-octulosonate biosynthesis; CMP-3-deoxy-D-manno-octulosonate from 3-deoxy-D-manno-octulosonate and CTP: step 1/1. The protein operates within bacterial outer membrane biogenesis; lipopolysaccharide biosynthesis. Activates KDO (a required 8-carbon sugar) for incorporation into bacterial lipopolysaccharide in Gram-negative bacteria. The chain is 3-deoxy-manno-octulosonate cytidylyltransferase from Christiangramia forsetii (strain DSM 17595 / CGMCC 1.15422 / KT0803) (Gramella forsetii).